The primary structure comprises 413 residues: MGGGNLNIEEIIEKVANGEIKFYQVEKYVNGDKRLATEIRRKALEKRLGIKLHHIGYYSIDPNELIGRNIENMIGVVQIPMGVAGPLKINGEYAKGEFYIPLATTEGALVASVNRGCSALTEAGGVVTTLIDDKMTRAPLIRCPNARRAREVAKWVEENLDYLQEKAVSKVTRHGKLRGVKPFIVGNNLYLRFEFETGDAMGMNMVTIASEEIMKVIEEEFPDVRYLALSGNLCVDKKPNAVNFILGRGKTVIAEAVVPRKIVEKKLKTTPELIAEVNYFKNLVGSAQAGSYGFNAHFANIVGAIFLATGQDEAQITEGAHGITIAEVTPDGDLYISITMPSLEIGTVGGGTRVPSQREALEIMGVAGGGDPPGINAKKFAEIVAGAVLAGELSLLAAIAAKHLARAHKMLGR.

Residues E106 and D312 each act as charge relay system in the active site. The active-site Proton donor is the H408.

Belongs to the HMG-CoA reductase family.

It carries out the reaction (R)-mevalonate + 2 NADP(+) + CoA = (3S)-3-hydroxy-3-methylglutaryl-CoA + 2 NADPH + 2 H(+). The protein operates within metabolic intermediate biosynthesis; (R)-mevalonate biosynthesis; (R)-mevalonate from acetyl-CoA: step 3/3. Its function is as follows. Converts HMG-CoA to mevalonate. The chain is 3-hydroxy-3-methylglutaryl-coenzyme A reductase (hmgA) from Pyrococcus horikoshii (strain ATCC 700860 / DSM 12428 / JCM 9974 / NBRC 100139 / OT-3).